A 616-amino-acid polypeptide reads, in one-letter code: Dihydroxy-acid dehydratase (616 aa).

D81 serves as a coordination point for Mg(2+). C122 is a binding site for [2Fe-2S] cluster. Positions 123 and 124 each coordinate Mg(2+). K124 carries the N6-carboxylysine modification. C195 is a [2Fe-2S] cluster binding site. Mg(2+) is bound at residue E491. Catalysis depends on S517, which acts as the Proton acceptor.

Belongs to the IlvD/Edd family. Homodimer. [2Fe-2S] cluster is required as a cofactor. Requires Mg(2+) as cofactor.

It catalyses the reaction (2R)-2,3-dihydroxy-3-methylbutanoate = 3-methyl-2-oxobutanoate + H2O. It carries out the reaction (2R,3R)-2,3-dihydroxy-3-methylpentanoate = (S)-3-methyl-2-oxopentanoate + H2O. The protein operates within amino-acid biosynthesis; L-isoleucine biosynthesis; L-isoleucine from 2-oxobutanoate: step 3/4. It participates in amino-acid biosynthesis; L-valine biosynthesis; L-valine from pyruvate: step 3/4. In terms of biological role, functions in the biosynthesis of branched-chain amino acids. Catalyzes the dehydration of (2R,3R)-2,3-dihydroxy-3-methylpentanoate (2,3-dihydroxy-3-methylvalerate) into 2-oxo-3-methylpentanoate (2-oxo-3-methylvalerate) and of (2R)-2,3-dihydroxy-3-methylbutanoate (2,3-dihydroxyisovalerate) into 2-oxo-3-methylbutanoate (2-oxoisovalerate), the penultimate precursor to L-isoleucine and L-valine, respectively. In Escherichia coli (strain 55989 / EAEC), this protein is Dihydroxy-acid dehydratase.